The following is a 521-amino-acid chain: Glucose-6-phosphate isomerase (521 aa).

The active-site Proton donor is Glu327. Active-site residues include His358 and Lys486.

It belongs to the GPI family.

Its subcellular location is the cytoplasm. It carries out the reaction alpha-D-glucose 6-phosphate = beta-D-fructose 6-phosphate. The protein operates within carbohydrate biosynthesis; gluconeogenesis. It functions in the pathway carbohydrate degradation; glycolysis; D-glyceraldehyde 3-phosphate and glycerone phosphate from D-glucose: step 2/4. In terms of biological role, catalyzes the reversible isomerization of glucose-6-phosphate to fructose-6-phosphate. This is Glucose-6-phosphate isomerase from Bordetella petrii (strain ATCC BAA-461 / DSM 12804 / CCUG 43448).